The following is a 535-amino-acid chain: CTP synthase (535 aa).

The amidoligase domain stretch occupies residues 1 to 267 (MTKFIFVTGG…DDIVIQRLQL (267 aa)). Serine 13 contributes to the CTP binding site. Serine 13 serves as a coordination point for UTP. An ATP-binding site is contributed by 14–19 (SLGKGI). Tyrosine 54 is an L-glutamine binding site. Residue aspartate 71 participates in ATP binding. Mg(2+)-binding residues include aspartate 71 and glutamate 141. Residues 148–150 (DIE), 188–193 (KTKPTQ), and lysine 224 contribute to the CTP site. Residues 188-193 (KTKPTQ) and lysine 224 contribute to the UTP site. 240–242 (RDA) contributes to the ATP binding site. Residues 293–535 (TIGLVGKYVS…VEAALNYQQK (243 aa)) form the Glutamine amidotransferase type-1 domain. Position 355 (glycine 355) interacts with L-glutamine. The active-site Nucleophile; for glutamine hydrolysis is cysteine 382. Residues 383 to 386 (LGMQ), glutamate 406, and arginine 463 each bind L-glutamine. Catalysis depends on residues histidine 508 and glutamate 510.

The protein belongs to the CTP synthase family. In terms of assembly, homotetramer.

It carries out the reaction UTP + L-glutamine + ATP + H2O = CTP + L-glutamate + ADP + phosphate + 2 H(+). The enzyme catalyses L-glutamine + H2O = L-glutamate + NH4(+). The catalysed reaction is UTP + NH4(+) + ATP = CTP + ADP + phosphate + 2 H(+). It participates in pyrimidine metabolism; CTP biosynthesis via de novo pathway; CTP from UDP: step 2/2. Allosterically activated by GTP, when glutamine is the substrate; GTP has no effect on the reaction when ammonia is the substrate. The allosteric effector GTP functions by stabilizing the protein conformation that binds the tetrahedral intermediate(s) formed during glutamine hydrolysis. Inhibited by the product CTP, via allosteric rather than competitive inhibition. Catalyzes the ATP-dependent amination of UTP to CTP with either L-glutamine or ammonia as the source of nitrogen. Regulates intracellular CTP levels through interactions with the four ribonucleotide triphosphates. The polypeptide is CTP synthase (Staphylococcus epidermidis (strain ATCC 35984 / DSM 28319 / BCRC 17069 / CCUG 31568 / BM 3577 / RP62A)).